A 479-amino-acid chain; its full sequence is MAQHSVYFPDAFLAQMREAMPSTLSFDEFIAACQRPLRRSIRINTLKISVADFLALTAPYGWLLTPIPWCDEGFWIERDDEDALPLGSTAEHLSGLFYIQEASSMLPVAALFADDNHPQRVMDMAAAPGSKTTQIAARMGNHGAILANEFSASRVKILHANLCRCGVANTALTHFDGRVFGAALPEMFDAILLDAPCSGEGVVRKDPDALKNWSPESNLDIAATQRELLESAFHALRPGGTLVYSTCTLNRQENEAVCLWLKETYTDAVEFLPLNDLFPDADRALTPEGFLHVFPQIYDCEGFFVARLRKISSLPALPAPTYKVGNFPFIPLKGHEALHITQAASAVGLLWDENLHLWQREKEVWLFPAAIESLIGKVRFSRLGIKLAESHNKGYRWQHEATVALACPNHAHALELSPQEAEEWYRGRDIYPQTIPAVDDVLVTFQHQPLGLAKRIGSRIKNSYPRELVRDGKLFTSNV.

S-adenosyl-L-methionine contacts are provided by residues alanine 125–lysine 131, glutamate 149, aspartate 176, and aspartate 194. Cysteine 247 serves as the catalytic Nucleophile.

Belongs to the class I-like SAM-binding methyltransferase superfamily. RsmB/NOP family.

The protein resides in the cytoplasm. The catalysed reaction is cytidine(1407) in 16S rRNA + S-adenosyl-L-methionine = 5-methylcytidine(1407) in 16S rRNA + S-adenosyl-L-homocysteine + H(+). Its function is as follows. Specifically methylates the cytosine at position 1407 (m5C1407) of 16S rRNA. The protein is Ribosomal RNA small subunit methyltransferase F of Salmonella arizonae (strain ATCC BAA-731 / CDC346-86 / RSK2980).